The sequence spans 679 residues: Glycine--tRNA ligase beta subunit (679 aa).

The protein belongs to the class-II aminoacyl-tRNA synthetase family. As to quaternary structure, tetramer of two alpha and two beta subunits.

The protein localises to the cytoplasm. The enzyme catalyses tRNA(Gly) + glycine + ATP = glycyl-tRNA(Gly) + AMP + diphosphate. The polypeptide is Glycine--tRNA ligase beta subunit (Streptococcus agalactiae serotype Ia (strain ATCC 27591 / A909 / CDC SS700)).